The primary structure comprises 215 residues: 3-demethoxyubiquinol 3-hydroxylase (215 aa).

Fe cation contacts are provided by Glu64, Glu94, His97, Glu146, Glu178, and His181.

It belongs to the COQ7 family. Fe cation serves as cofactor.

It localises to the cell membrane. It catalyses the reaction a 5-methoxy-2-methyl-3-(all-trans-polyprenyl)benzene-1,4-diol + AH2 + O2 = a 3-demethylubiquinol + A + H2O. It functions in the pathway cofactor biosynthesis; ubiquinone biosynthesis. In terms of biological role, catalyzes the hydroxylation of 2-nonaprenyl-3-methyl-6-methoxy-1,4-benzoquinol during ubiquinone biosynthesis. The chain is 3-demethoxyubiquinol 3-hydroxylase from Pseudomonas aeruginosa (strain LESB58).